The primary structure comprises 224 residues: 7-cyano-7-deazaguanine synthase (224 aa).

10 to 20 (LSGGLDSATVV) lines the ATP pocket. Cysteine 189, cysteine 199, cysteine 202, and cysteine 205 together coordinate Zn(2+).

This sequence belongs to the QueC family. Zn(2+) is required as a cofactor.

It carries out the reaction 7-carboxy-7-deazaguanine + NH4(+) + ATP = 7-cyano-7-deazaguanine + ADP + phosphate + H2O + H(+). Its pathway is purine metabolism; 7-cyano-7-deazaguanine biosynthesis. Functionally, catalyzes the ATP-dependent conversion of 7-carboxy-7-deazaguanine (CDG) to 7-cyano-7-deazaguanine (preQ(0)). The protein is 7-cyano-7-deazaguanine synthase of Pseudomonas fluorescens (strain SBW25).